Here is a 350-residue protein sequence, read N- to C-terminus: L-serine dehydratase (350 aa).

An N6-(pyridoxal phosphate)lysine modification is found at Lys62.

Belongs to the serine/threonine dehydratase family. It depends on pyridoxal 5'-phosphate as a cofactor.

Its subcellular location is the cytoplasm. It carries out the reaction L-serine = pyruvate + NH4(+). The protein operates within carbohydrate biosynthesis; gluconeogenesis. This Dictyostelium discoideum (Social amoeba) protein is L-serine dehydratase (sds).